The following is a 449-amino-acid chain: Putative F-box/FBD/LRR-repeat protein At3g49480 (449 aa).

Residues 11-59 (EDRISSLPDDLLVKILLCVPTKDAAATTFLSKRWRFVWRMLPRLNYIET) enclose the F-box domain. LRR repeat units lie at residues 60 to 91 (TSDV…WIDL), 153 to 180 (RLTL…DLFC), 182 to 206 (VYKD…KVTR), 235 to 260 (FRED…HIFD), 275 to 302 (VTVV…ALSP), and 327 to 352 (SEYD…LVDS). In terms of domain architecture, FBD spans 364–412 (WNQPSSIPRCLSSHLEIFEWDGYVGREDEKKIIRYILENSKYLKTAGIS).

The chain is Putative F-box/FBD/LRR-repeat protein At3g49480 from Arabidopsis thaliana (Mouse-ear cress).